Here is a 169-residue protein sequence, read N- to C-terminus: uncharacterized protein (169 aa).

Positions 28–157 (ELHLVIHVCI…EFIPYFFLNQ (130 aa)) constitute a Nudix hydrolase domain. A Nudix box motif is present at residues 65–87 (AGSALKGETSQQAAEREVQEELG). Positions 81 and 85 each coordinate Mg(2+).

It belongs to the Nudix hydrolase family. The cofactor is Mg(2+).

This is an uncharacterized protein from Listeria monocytogenes serovar 1/2a (strain ATCC BAA-679 / EGD-e).